A 553-amino-acid polypeptide reads, in one-letter code: Chaperonin GroEL (553 aa).

ATP contacts are provided by residues 30 to 33 (TLGP), Lys51, 87 to 91 (DGTTT), Gly416, and Asp496.

This sequence belongs to the chaperonin (HSP60) family. Forms a cylinder of 14 subunits composed of two heptameric rings stacked back-to-back. Interacts with the co-chaperonin GroES.

The protein localises to the cytoplasm. The catalysed reaction is ATP + H2O + a folded polypeptide = ADP + phosphate + an unfolded polypeptide.. Its function is as follows. Together with its co-chaperonin GroES, plays an essential role in assisting protein folding. The GroEL-GroES system forms a nano-cage that allows encapsulation of the non-native substrate proteins and provides a physical environment optimized to promote and accelerate protein folding. The polypeptide is Chaperonin GroEL (Alkalilimnicola ehrlichii (strain ATCC BAA-1101 / DSM 17681 / MLHE-1)).